The following is a 739-amino-acid chain: Phosphoribosylformylglycinamidine synthase subunit PurL (739 aa).

The active site involves histidine 53. Residues tyrosine 56 and lysine 95 each contribute to the ATP site. Glutamate 97 lines the Mg(2+) pocket. Residues 98-101 (SHNH) and arginine 120 contribute to the substrate site. Catalysis depends on histidine 99, which acts as the Proton acceptor. Aspartate 121 contributes to the Mg(2+) binding site. Glutamine 244 is a binding site for substrate. Aspartate 274 contributes to the Mg(2+) binding site. 318–320 (ESQ) contacts substrate. Residues aspartate 501 and glycine 538 each coordinate ATP. Residue asparagine 539 coordinates Mg(2+). Serine 541 is a binding site for substrate.

It belongs to the FGAMS family. In terms of assembly, monomer. Part of the FGAM synthase complex composed of 1 PurL, 1 PurQ and 2 PurS subunits.

Its subcellular location is the cytoplasm. It catalyses the reaction N(2)-formyl-N(1)-(5-phospho-beta-D-ribosyl)glycinamide + L-glutamine + ATP + H2O = 2-formamido-N(1)-(5-O-phospho-beta-D-ribosyl)acetamidine + L-glutamate + ADP + phosphate + H(+). It participates in purine metabolism; IMP biosynthesis via de novo pathway; 5-amino-1-(5-phospho-D-ribosyl)imidazole from N(2)-formyl-N(1)-(5-phospho-D-ribosyl)glycinamide: step 1/2. In terms of biological role, part of the phosphoribosylformylglycinamidine synthase complex involved in the purines biosynthetic pathway. Catalyzes the ATP-dependent conversion of formylglycinamide ribonucleotide (FGAR) and glutamine to yield formylglycinamidine ribonucleotide (FGAM) and glutamate. The FGAM synthase complex is composed of three subunits. PurQ produces an ammonia molecule by converting glutamine to glutamate. PurL transfers the ammonia molecule to FGAR to form FGAM in an ATP-dependent manner. PurS interacts with PurQ and PurL and is thought to assist in the transfer of the ammonia molecule from PurQ to PurL. The polypeptide is Phosphoribosylformylglycinamidine synthase subunit PurL (Listeria innocua serovar 6a (strain ATCC BAA-680 / CLIP 11262)).